The primary structure comprises 131 residues: UPF0342 protein DSY1594 (131 aa).

The protein belongs to the UPF0342 family.

The polypeptide is UPF0342 protein DSY1594 (Desulfitobacterium hafniense (strain Y51)).